Reading from the N-terminus, the 644-residue chain is Exoribonuclease 2 (644 aa).

Positions 189–516 constitute an RNB domain; the sequence is REDLTSLDFV…NHRLLKAVIK (328 aa). The 83-residue stretch at 561-643 folds into the S1 motif domain; the sequence is GTRFAAEIVD…ETRSIIARPV (83 aa).

Belongs to the RNR ribonuclease family. RNase II subfamily.

Its subcellular location is the cytoplasm. It carries out the reaction Exonucleolytic cleavage in the 3'- to 5'-direction to yield nucleoside 5'-phosphates.. Involved in mRNA degradation. Hydrolyzes single-stranded polyribonucleotides processively in the 3' to 5' direction. The chain is Exoribonuclease 2 from Shigella flexneri.